The chain runs to 310 residues: Small ribosomal subunit biogenesis GTPase RsgA 2 (310 aa).

The CP-type G domain maps to 77–238 (LSKQSHILAA…IIDTPGIKGF (162 aa)). GTP is bound by residues 126–129 (NKVD) and 180–188 (GHSGVGKST). Cysteine 262, cysteine 267, histidine 269, and cysteine 275 together coordinate Zn(2+).

It belongs to the TRAFAC class YlqF/YawG GTPase family. RsgA subfamily. Monomer. Associates with 30S ribosomal subunit, binds 16S rRNA. Requires Zn(2+) as cofactor.

Its subcellular location is the cytoplasm. Functionally, one of several proteins that assist in the late maturation steps of the functional core of the 30S ribosomal subunit. Helps release RbfA from mature subunits. May play a role in the assembly of ribosomal proteins into the subunit. Circularly permuted GTPase that catalyzes slow GTP hydrolysis, GTPase activity is stimulated by the 30S ribosomal subunit. This is Small ribosomal subunit biogenesis GTPase RsgA 2 from Bacteroides thetaiotaomicron (strain ATCC 29148 / DSM 2079 / JCM 5827 / CCUG 10774 / NCTC 10582 / VPI-5482 / E50).